The following is a 108-amino-acid chain: Small ribosomal subunit protein bS6 (108 aa).

It belongs to the bacterial ribosomal protein bS6 family.

Binds together with bS18 to 16S ribosomal RNA. In Dichelobacter nodosus (strain VCS1703A), this protein is Small ribosomal subunit protein bS6.